The chain runs to 236 residues: Biosynthetic peptidoglycan transglycosylase (236 aa).

Residues 12–31 form a helical membrane-spanning segment; sequence ALLWFAASSIVLVLVFRWVP.

The protein belongs to the glycosyltransferase 51 family.

It localises to the cell inner membrane. It carries out the reaction [GlcNAc-(1-&gt;4)-Mur2Ac(oyl-L-Ala-gamma-D-Glu-L-Lys-D-Ala-D-Ala)](n)-di-trans,octa-cis-undecaprenyl diphosphate + beta-D-GlcNAc-(1-&gt;4)-Mur2Ac(oyl-L-Ala-gamma-D-Glu-L-Lys-D-Ala-D-Ala)-di-trans,octa-cis-undecaprenyl diphosphate = [GlcNAc-(1-&gt;4)-Mur2Ac(oyl-L-Ala-gamma-D-Glu-L-Lys-D-Ala-D-Ala)](n+1)-di-trans,octa-cis-undecaprenyl diphosphate + di-trans,octa-cis-undecaprenyl diphosphate + H(+). It functions in the pathway cell wall biogenesis; peptidoglycan biosynthesis. Its function is as follows. Peptidoglycan polymerase that catalyzes glycan chain elongation from lipid-linked precursors. The chain is Biosynthetic peptidoglycan transglycosylase from Pseudomonas putida (strain GB-1).